The chain runs to 248 residues: Glutathione S-transferase omega-2 (248 aa).

The 80-residue stretch at 22-101 (GVIRIYSMRF…YLDDVYPGRK (80 aa)) folds into the GST N-terminal domain. The active-site Nucleophile is the C32. Residues K59, I72, and 85–86 (ES) each bind glutathione. In terms of domain architecture, GST C-terminal spans 106–231 (DPYERARQKM…VFLGFLNLYF (126 aa)).

It belongs to the GST superfamily. Omega family.

It catalyses the reaction RX + glutathione = an S-substituted glutathione + a halide anion + H(+). The enzyme catalyses L-dehydroascorbate + 2 glutathione = glutathione disulfide + L-ascorbate. The catalysed reaction is methylarsonate + 2 glutathione + H(+) = methylarsonous acid + glutathione disulfide + H2O. Exhibits glutathione-dependent thiol transferase activity. Has high dehydroascorbate reductase activity and may contribute to the recycling of ascorbic acid. Participates in the biotransformation of inorganic arsenic and reduces monomethylarsonic acid (MMA). This Mus musculus (Mouse) protein is Glutathione S-transferase omega-2 (Gsto2).